A 118-amino-acid polypeptide reads, in one-letter code: Large ribosomal subunit protein bL20 (118 aa).

Belongs to the bacterial ribosomal protein bL20 family.

Binds directly to 23S ribosomal RNA and is necessary for the in vitro assembly process of the 50S ribosomal subunit. It is not involved in the protein synthesizing functions of that subunit. The polypeptide is Large ribosomal subunit protein bL20 (Enterobacter sp. (strain 638)).